Reading from the N-terminus, the 700-residue chain is ATP-dependent zinc metalloprotease FtsH (700 aa).

Over 1 to 10 (MNNNKGGFLR) the chain is Cytoplasmic. Residues 11–31 (SSVFYIFIFLAVVGMVYGLFG) form a helical membrane-spanning segment. Residues 32-130 (NDKTTTKTIT…LVTKQAENSG (99 aa)) lie on the Extracellular side of the membrane. A helical membrane pass occupies residues 131-151 (FWLNLLVSLVPVLLIVAVFYL). Over 152-700 (MMNQAGGGKG…ETDDNNTENK (549 aa)) the chain is Cytoplasmic. An ATP-binding site is contributed by 227-234 (GPPGTGKT). Residue His449 participates in Zn(2+) binding. Residue Glu450 is part of the active site. Residues His453 and Asp525 each contribute to the Zn(2+) site. The tract at residues 644-700 (KSFEEAKAAADAKDSQAEQRFEKQDEEKSSDDHSESKNEDTDSTDKSETDDNNTENK) is disordered.

It in the central section; belongs to the AAA ATPase family. This sequence in the C-terminal section; belongs to the peptidase M41 family. Homohexamer. Zn(2+) serves as cofactor.

The protein localises to the cell membrane. In terms of biological role, acts as a processive, ATP-dependent zinc metallopeptidase for both cytoplasmic and membrane proteins. Plays a role in the quality control of integral membrane proteins. This chain is ATP-dependent zinc metalloprotease FtsH, found in Leuconostoc mesenteroides subsp. mesenteroides (strain ATCC 8293 / DSM 20343 / BCRC 11652 / CCM 1803 / JCM 6124 / NCDO 523 / NBRC 100496 / NCIMB 8023 / NCTC 12954 / NRRL B-1118 / 37Y).